Reading from the N-terminus, the 474-residue chain is Glutamate--tRNA ligase 1 (474 aa).

Residues 11 to 21 (PSPTGFLHIGG) carry the 'HIGH' region motif. Over residues 113 to 133 (TARAEGRAPRYDGRWRDRDPS) the composition is skewed to basic and acidic residues. A disordered region spans residues 113–136 (TARAEGRAPRYDGRWRDRDPSEAP). The short motif at 240–244 (KLSKR) is the 'KMSKS' region element. K243 contributes to the ATP binding site.

Belongs to the class-I aminoacyl-tRNA synthetase family. Glutamate--tRNA ligase type 1 subfamily. In terms of assembly, monomer.

The protein resides in the cytoplasm. It catalyses the reaction tRNA(Glu) + L-glutamate + ATP = L-glutamyl-tRNA(Glu) + AMP + diphosphate. Catalyzes the attachment of glutamate to tRNA(Glu) in a two-step reaction: glutamate is first activated by ATP to form Glu-AMP and then transferred to the acceptor end of tRNA(Glu). This Methylorubrum extorquens (strain PA1) (Methylobacterium extorquens) protein is Glutamate--tRNA ligase 1.